Reading from the N-terminus, the 69-residue chain is DNA gyrase inhibitor YacG (69 aa).

Positions 7, 10, 26, and 30 each coordinate Zn(2+).

It belongs to the DNA gyrase inhibitor YacG family. As to quaternary structure, interacts with GyrB. Zn(2+) serves as cofactor.

Functionally, inhibits all the catalytic activities of DNA gyrase by preventing its interaction with DNA. Acts by binding directly to the C-terminal domain of GyrB, which probably disrupts DNA binding by the gyrase. The protein is DNA gyrase inhibitor YacG of Shewanella baltica (strain OS223).